The following is a 100-amino-acid chain: Urease subunit gamma (100 aa).

This sequence belongs to the urease gamma subunit family. Heterotrimer of UreA (gamma), UreB (beta) and UreC (alpha) subunits. Three heterotrimers associate to form the active enzyme.

It is found in the cytoplasm. It catalyses the reaction urea + 2 H2O + H(+) = hydrogencarbonate + 2 NH4(+). It functions in the pathway nitrogen metabolism; urea degradation; CO(2) and NH(3) from urea (urease route): step 1/1. This is Urease subunit gamma from Azoarcus sp. (strain BH72).